We begin with the raw amino-acid sequence, 581 residues long: Arginine--tRNA ligase (581 aa).

A 'HIGH' region motif is present at residues 126–136; it reads PNLAKEMHVGH.

Belongs to the class-I aminoacyl-tRNA synthetase family. In terms of assembly, monomer.

The protein resides in the cytoplasm. The catalysed reaction is tRNA(Arg) + L-arginine + ATP = L-arginyl-tRNA(Arg) + AMP + diphosphate. The chain is Arginine--tRNA ligase from Shewanella sp. (strain MR-7).